The chain runs to 901 residues: Nuclear factor of activated T-cells, cytoplasmic 4 (901 aa).

Disordered regions lie at residues 15–179 (LVFG…LSSW) and 203–362 (NEAA…EDSV). Residues 61 to 81 (IPRPPPPRPGMHSPPPRPAPS) show a composition bias toward pro residues. The segment covering 96-109 (GGPGGNAGGAGGGR) has biased composition (gly residues). Residues 114–119 (PSIRIT) are calcineurin-binding. Residues 114–123 (PSIRITSISP) show a composition bias toward low complexity. The segment covering 151-165 (GFGGYREAGGQGGGA) has biased composition (gly residues). Residues 166–179 (FFSPSPGSSSLSSW) are compositionally biased toward low complexity. 2 positions are modified to phosphoserine; by MAPK7 and MAPK14: serine 168 and serine 170. Serine 213 and serine 217 each carry phosphoserine; by MAPK8 and MAPK9. The SP 1 repeat unit spans residues 213-229 (SPLPSPRASPRPWTPED). The segment at 213–293 (SPLPSPRASP…LSRRGSLGEE (81 aa)) is 2 approximate SP repeats. Composition is skewed to pro residues over residues 215–227 (LPSP…PWTP) and 254–263 (GPVPASPRPA). The Nuclear localization signal motif lies at 268 to 270 (KRR). The span at 272-288 (SSSGTPSSASPALSRRG) shows a compositional bias: low complexity. Residues 277–293 (PSSASPALSRRGSLGEE) form an SP 2; approximate repeat. At serine 289 the chain carries Phosphoserine. Serine 334 is modified (phosphoserine; by RPS6KA3). Serine 344 carries the phosphoserine modification. Residues 401–582 (SALPPLDWPL…VPIECSQRSA (182 aa)) form the RHD domain. The DNA-binding element occupies 430–437 (RAHYETEG). Residues 586–683 (PQVETYSPSA…KRSPTQSFKF (98 aa)) form the IPT/TIG domain. The Nuclear localization signal signature appears at 672-674 (RRK). Lysine 689 participates in a covalent cross-link: Glycyl lysine isopeptide (Lys-Gly) (interchain with G-Cter in SUMO2). Disordered regions lie at residues 695–721 (DSSL…PRPP) and 827–869 (PQSA…FRDS).

In terms of assembly, member of the multicomponent NFATC transcription complex that consists of at least two components, a pre-existing cytoplasmic component NFATC2 and an inducible nuclear component NFATC1. Other NFAT proteins, such as NFATC3, or members of the activating protein-1 (AP-1) family and MAF can also bind the complex. NFAT proteins can bind DNA as monomers or dimers. Component of a promoter-binding complex composed of STAT3, NFATC3 and NFATC4; complex formation is enhanced by calcineurin. Interacts with CREBBP; this interaction potentiates transcription activation. Interacts with MAPK8/JNK1 and MAPK9/JNK2. Interacts with GATA4 (via the second Zn finger). Interacts (via N-terminus) with IRAK1 (via C-terminus). Interacts with RPS6KA3. Interacts with HOMER1, HOMER2 and HOMER3; this interaction competes with calcineurin/PPP3CA-binding and hence prevents NFATC4 dephosphorylation and activation. Interacts with ESR1 and ESR2; this interaction decreases NFATC4 transcriptional activity. Interacts with MTOR and MAPK7/ERK5. Interacts with TRIM17; this interaction prevents NFATC3 nuclear localization. Interacts with TCF25 (via C-terminus); the interaction leads to suppression of NFATC4 transcription factor activity and is reduced following stimulation with angiotensin-2. In terms of processing, phosphorylated by NFATC-kinases; dephosphorylated by calcineurin/PPP3CA. Phosphorylated on Ser-168 and Ser-170 by MTOR, IRAK1, MAPK7/ERK5 and MAPK14/p38, on Ser-213 and Ser-217 by MAPK8 and MAPK9, and on Ser-289 and Ser-344 by RPS6KA3. Phosphorylated by GSK3B. Phosphorylation by GSK3B markedly increases NFATC4 ubiquitination. Phosphorylation by MAPK8/JNK1, MAPK9/JNK2 and RPS6KA3 may stimulate NFATC4 transcriptional activity. Phosphorylation at Ser-168 and Ser-170 is stimulated by UV irradiation. Post-translationally, ubiquitinated, leading to degradation by the proteasome. Ubiquitination may be stimulated by GSK3B-dependent phosphorylation. Polyubiquitin linkage mainly occurs through 'Lys-48'. As to expression, widely expressed. In the brain, expressed in neurons. Expressed in the hippocampus (at protein level). In the hippocampus, expressed in both the CA1-CA3 pyramidal cells and the dentate gyrus granular cells. Expressed in a subset of hippocampal cells representing adult-born neurons (at protein level). Expressed in the submandibular gland (at protein level). In the olfactory system, expressed at low levels in the glomerular and granular layers and in the mitral cell layer. In the cerebellum, expressed at moderate levels in granular neurons. Expressed at moderate levels in the choroid plexus and ependymal cells. Expressed in neurons of the cochlear nucleus (at protein level). Expressed at low levels in the heart (at protein level). Expressed in ventricular cardiomyocytes (at protein level). Expressed in the lung.

Its subcellular location is the cytoplasm. It localises to the nucleus. Its function is as follows. Ca(2+)-regulated transcription factor that is involved in several processes, including the development and function of the immune, cardiovascular, musculoskeletal, and nervous systems. Involved in T-cell activation, stimulating the transcription of cytokine genes, including that of IL2 and IL4. Following JAK/STAT signaling activation and as part of a complex with NFATC3 and STAT3, binds to the alpha-beta E4 promoter region of CRYAB and activates transcription in cardiomyocytes. Along with NFATC3, involved in embryonic heart development. Involved in mitochondrial energy metabolism required for cardiac morphogenesis and function. Transactivates many genes involved in heart physiology. Along with GATA4, binds to and activates NPPB/BNP promoter. Activates NPPA/ANP/ANF and MYH7/beta-MHC transcription. Binds to and transactivates AGTR2 gene promoter. Involved in the regulation of adult hippocampal neurogenesis. Involved in BDNF-driven pro-survival signaling in hippocampal adult-born neurons. Involved in the formation of long-term spatial memory and long-term potentiation. In cochlear nucleus neurons, may play a role in deafferentation-induced apoptosis during a developmental critical period when auditory neurons depend on afferent input for survival. Binds to and activates the BACE1/Beta-secretase 1 promoter, hence may regulate the proteolytic processing of the amyloid precursor protein (APP). Plays a role in adipocyte differentiation. May be involved in myoblast differentiation into myotubes. Binds the consensus DNA sequence 5'-GGAAAAT-3'. In the presence of CREBBP, activates TNF transcription. Binds to PPARG gene promoter and regulates its activity. Binds to PPARG and REG3G gene promoters. The protein is Nuclear factor of activated T-cells, cytoplasmic 4 of Mus musculus (Mouse).